The following is an 87-amino-acid chain: Protein ORF3 (87 aa).

Residues 58 to 87 (GALNNAPREPSAPPLSQTLSPRQVLARYQM) form a disordered region. Residues 67–70 (PSAP) carry the PTAP/PSAP motif motif.

It belongs to the hepevirus ORF3 protein family. Palmitoylated in the N-terminus.

It is found in the host endoplasmic reticulum membrane. It localises to the host cytoplasm. The protein resides in the host cytoskeleton. Its subcellular location is the virion. The protein localises to the host cell membrane. In terms of biological role, small multifunctional phosphoprotein involved in virion morphogenesis, egress and counteracting host innate immunity. This Avian hepatitis E virus (isolate Chicken/California/Meng) (AHEV) protein is Protein ORF3.